Here is a 197-residue protein sequence, read N- to C-terminus: Viral polyamine acetyltransferase (197 aa).

Position 22 (Asn22) interacts with acetyl-CoA. Residue Glu27 is part of the active site. The N-acetyltransferase domain occupies 102–182 (SYTPDDKCLY…YQYGITKPFD (81 aa)). Residues Ile115, Ser117, Gly121, Gly123, Ala125, Thr126, Thr149, Asn150, and Lys159 each contribute to the acetyl-CoA site.

Belongs to the acetyltransferase family.

It carries out the reaction spermine + acetyl-CoA = N(1)-acetylspermine + CoA + H(+). The catalysed reaction is spermidine + acetyl-CoA = N(1)-acetylspermidine + CoA + H(+). The enzyme catalyses spermidine + acetyl-CoA = N(8)-acetylspermidine + CoA + H(+). It catalyses the reaction putrescine + acetyl-CoA = N-acetylputrescine + CoA + H(+). It carries out the reaction cadaverine + acetyl-CoA = N-acetylcadaverine + CoA + H(+). The catalysed reaction is sym-homospermidine + acetyl-CoA = N(1)-acetyl-sym-homospermidine + CoA + H(+). Its function is as follows. Acetylates polyamines such as spermine, spermidine, cadaverine, homospermidine and putrescine (the latter with low efficiency). May play a role in the regulation of polyamine catabolism in the host during viral replication. This is Viral polyamine acetyltransferase from Chlorella (PBCV-1).